Here is a 595-residue protein sequence, read N- to C-terminus: Estrogen receptor (595 aa).

The modulating (transactivation AF-1); mediates interaction with MACROD1 stretch occupies residues 1–184 (MTMTLHTKAS…AMESAKETRY (184 aa)). Residue serine 10 is glycosylated (O-linked (GlcNAc) serine). The required for interaction with NCOA1 stretch occupies residues 35 to 47 (LERPLGEVYVDGS). Residues 35–174 (LERPLGEVYV…LASTGDKGSM (140 aa)) are interaction with DDX5; self-association. Phosphoserine; by CDK2 occurs at positions 104 and 106. Serine 118 is modified (phosphoserine). The segment at 149–173 (FYRPTSDNRRQSGRERLASTGDKGS) is disordered. The segment covering 154–165 (SDNRRQSGRERL) has biased composition (basic and acidic residues). The residue at position 167 (serine 167) is a Phosphoserine; by CK2. NR C4-type zinc fingers lie at residues 185-205 (CAVC…CEGC) and 221-245 (CPAT…LRKC). Positions 185 to 250 (CAVCNDYASG…RLRKCYEVGM (66 aa)) form a DNA-binding region, nuclear receptor. The mediates interaction with DNTTIP2 stretch occupies residues 185–310 (CAVCNDYASG…TKKNSPALSL (126 aa)). Residues 251-310 (MKGGIRKDRRGGRMLKHKRQRDEGEGRNEVGSSGDVRASNLWPSPLLIKHTKKNSPALSL) form a hinge region. Basic residues predominate over residues 257 to 269 (KDRRGGRMLKHKR). A disordered region spans residues 257–287 (KDRRGGRMLKHKRQRDEGEGRNEVGSSGDVR). Arginine 260 bears the Asymmetric dimethylarginine; by PRMT1 mark. The interaction with AKAP13 stretch occupies residues 262-595 (GRMLKHKRQR…EEAGAFPTTV (334 aa)). The tract at residues 264–595 (MLKHKRQRDE…EEAGAFPTTV (332 aa)) is self-association. The region spanning 311–547 (TADQMVSALL…DLLLEMLDAH (237 aa)) is the NR LBD domain. Positions 311–595 (TADQMVSALL…EEAGAFPTTV (285 aa)) are transactivation AF-2. The 17beta-estradiol site is built by glutamate 353 and arginine 394. Cysteine 447 is lipidated: S-palmitoyl cysteine. A 17beta-estradiol-binding site is contributed by histidine 524. Tyrosine 537 carries the post-translational modification Phosphotyrosine; by Tyr-kinases. Threonine 571 carries O-linked (GlcNAc) threonine glycosylation.

It belongs to the nuclear hormone receptor family. NR3 subfamily. In terms of assembly, binds DNA as a homodimer. Can form a heterodimer with ESR2. Interacts with coactivator NCOA5. Interacts with PELP1, the interaction is enhanced by 17-beta-estradiol; the interaction increases ESR1 transcriptional activity. Interacts with NCOA7; the interaction is ligand-inducible. Interacts with AKAP13, CUEDC2, HEXIM1, KDM5A, MAP1S, SMARD1, and UBE1C. Interacts with MUC1; the interaction is stimulated by 7 beta-estradiol (E2) and enhances ESR1-mediated transcription. Interacts with DNTTIP2, and UIMC1. Interacts with KMT2D/MLL2. Interacts with ATAD2; the interaction is enhanced by estradiol. Interacts with KIF18A and LDB1. Interacts with RLIM (via its C-terminus). Interacts with MACROD1. Interacts with SH2D4A and PLCG. Interacts with SH2D4A; the interaction blocks binding to PLCG and inhibits estrogen-induced cell proliferation. Interacts with DYNLL1. Interacts with CCDC62; the interaction requires estradiol and appears to enhance the transcription of target genes. Interacts with NR2C1; the interaction prevents homodimerization of ESR1 and suppresses its transcriptional activity and cell growth. Interacts with DNAAF4. Interacts with PRMT2. Interacts with RBFOX2. Interacts with EP300; the interaction is estrogen-dependent and enhanced by CITED1. Interacts with CITED1; the interaction is estrogen-dependent. Interacts with FAM120B, FOXL2, PHB2 and SLC30A9. Interacts with coactivators NCOA3 and NCOA6. Interacts with STK3/MST2 only in the presence of SAV1 and vice-versa. Binds to CSNK1D. Interacts with NCOA2; NCOA2 can interact with ESR1 AF-1 and AF-2 domains simultaneously and mediate their transcriptional synergy. Interacts with DDX5. Interacts with NCOA1; the interaction seems to require a self-association of N-terminal and C-terminal regions. Interacts with ZNF366, DDX17, NFKB1, RELA, SP1 and SP3. Interacts with NRIP1. Interacts with GPER1; the interaction occurs in an estrogen-dependent manner. Interacts with CLOCK and the interaction is stimulated by estrogen. Interacts with TRIP4 (ufmylated); estrogen dependent. Interacts with LMTK3; the interaction phosphorylates ESR1 (in vitro) and protects it against proteasomal degradation. Interacts with CCAR2 (via N-terminus) in a ligand-independent manner. Interacts with ZFHX3. Interacts with SFR1 in a ligand-dependent and -independent manner. Interacts with DCAF13, LATS1 and DCAF1; regulates ESR1 ubiquitination and ubiquitin-mediated proteasomal degradation. Interacts (via DNA-binding domain) with POU4F2 (C-terminus); this interaction increases the estrogen receptor ESR1 transcriptional activity in a DNA- and ligand 17-beta-estradiol-independent manner. Interacts with ESRRB isoform 1. Interacts with UBE3A and WBP2. Interacts with GTF2B. Interacts with RBM39. In the absence of hormonal ligand, interacts with TACC1. Interacts with PI3KR1 or PI3KR2 and PTK2/FAK1. Interacts with SRC. Interacts with BAG1; the interaction is promoted in the absence of estradiol (17-beta-estradiol/E2). Interacts with and ubiquitinated by STUB1; the interaction is promoted in the absence of estradiol (17-beta-estradiol/E2). Interacts with NEDD8. Ubiquitinated; regulated by LATS1 via DCAF1 it leads to ESR1 proteasomal degradation. Deubiquitinated by OTUB1. Ubiquitinated by STUB1/CHIP; in the CA1 hippocampal region following loss of endogenous circulating estradiol (17-beta-estradiol/E2). Ubiquitinated by UBR5, leading to its degradation: UBR5 specifically recognizes and binds ligand-bound ESR1 when it is not associated with coactivators (NCOAs). In presence of NCOAs, the UBR5-degron is not accessible, preventing its ubiquitination and degradation. Post-translationally, phosphorylated by cyclin A/CDK2 and CK1. Phosphorylation probably enhances transcriptional activity. Dephosphorylation at Ser-118 by PPP5C inhibits its transactivation activity. Phosphorylated by LMTK3 (in vitro). In terms of processing, palmitoylated at Cys-447 by ZDHHC7 and ZDHHC21. Palmitoylation is required for plasma membrane targeting and for rapid intracellular signaling via ERK and AKT kinases and cAMP generation, but not for signaling mediated by the nuclear hormone receptor. Dimethylated by PRMT1 at Arg-260. The methylation may favor cytoplasmic localization. Demethylated by JMJD6 at Arg-260.

Its subcellular location is the nucleus. The protein localises to the cytoplasm. The protein resides in the golgi apparatus. It is found in the cell membrane. Nuclear hormone receptor. The steroid hormones and their receptors are involved in the regulation of eukaryotic gene expression and affect cellular proliferation and differentiation in target tissues. Ligand-dependent nuclear transactivation involves either direct homodimer binding to a palindromic estrogen response element (ERE) sequence or association with other DNA-binding transcription factors, such as AP-1/c-Jun, c-Fos, ATF-2, Sp1 and Sp3, to mediate ERE-independent signaling. Ligand binding induces a conformational change allowing subsequent or combinatorial association with multiprotein coactivator complexes through LXXLL motifs of their respective components. Mutual transrepression occurs between the estrogen receptor (ER) and NF-kappa-B in a cell-type specific manner. Decreases NF-kappa-B DNA-binding activity and inhibits NF-kappa-B-mediated transcription from the IL6 promoter and displace RELA/p65 and associated coregulators from the promoter. Recruited to the NF-kappa-B response element of the CCL2 and IL8 promoters and can displace CREBBP. Present with NF-kappa-B components RELA/p65 and NFKB1/p50 on ERE sequences. Can also act synergistically with NF-kappa-B to activate transcription involving respective recruitment adjacent response elements; the function involves CREBBP. Can activate the transcriptional activity of TFF1. Also mediates membrane-initiated estrogen signaling involving various kinase cascades. Essential for MTA1-mediated transcriptional regulation of BRCA1 and BCAS3. Maintains neuronal survival in response to ischemic reperfusion injury when in the presence of circulating estradiol (17-beta-estradiol/E2). The polypeptide is Estrogen receptor (ESR1) (Felis catus (Cat)).